Here is a 62-residue protein sequence, read N- to C-terminus: Small ribosomal subunit protein bS21 (62 aa).

Belongs to the bacterial ribosomal protein bS21 family.

This is Small ribosomal subunit protein bS21 (rpsU) from Mycoplasma genitalium (strain ATCC 33530 / DSM 19775 / NCTC 10195 / G37) (Mycoplasmoides genitalium).